Consider the following 255-residue polypeptide: Acetyl-coenzyme A carboxylase carboxyl transferase subunit alpha (255 aa).

Positions 1-235 (MNIAKIVREA…KKELQTELAR (235 aa)) constitute a CoA carboxyltransferase C-terminal domain.

This sequence belongs to the AccA family. In terms of assembly, acetyl-CoA carboxylase is a heterohexamer composed of biotin carboxyl carrier protein (AccB), biotin carboxylase (AccC) and two subunits each of ACCase subunit alpha (AccA) and ACCase subunit beta (AccD).

The protein localises to the cytoplasm. The catalysed reaction is N(6)-carboxybiotinyl-L-lysyl-[protein] + acetyl-CoA = N(6)-biotinyl-L-lysyl-[protein] + malonyl-CoA. It participates in lipid metabolism; malonyl-CoA biosynthesis; malonyl-CoA from acetyl-CoA: step 1/1. In terms of biological role, component of the acetyl coenzyme A carboxylase (ACC) complex. First, biotin carboxylase catalyzes the carboxylation of biotin on its carrier protein (BCCP) and then the CO(2) group is transferred by the carboxyltransferase to acetyl-CoA to form malonyl-CoA. The sequence is that of Acetyl-coenzyme A carboxylase carboxyl transferase subunit alpha from Streptococcus pneumoniae serotype 19F (strain G54).